The sequence spans 461 residues: Dihydrofolate reductase (461 aa).

Residues 233 to 447 (DLTMIVAVSS…VEIEFELYGK (215 aa)) enclose the DHFR domain. NADP(+)-binding positions include alanine 239 and 246–252 (GIGKKNS). 260–265 (EMAYFA) contacts substrate. 292-294 (RSC) contributes to the NADP(+) binding site. Arginine 308 lines the substrate pocket. NADP(+) contacts are provided by residues 314–316 (TRN) and 365–372 (GGSFLYGS).

This sequence belongs to the dihydrofolate reductase family.

The enzyme catalyses (6S)-5,6,7,8-tetrahydrofolate + NADP(+) = 7,8-dihydrofolate + NADPH + H(+). The protein operates within cofactor biosynthesis; tetrahydrofolate biosynthesis; 5,6,7,8-tetrahydrofolate from 7,8-dihydrofolate: step 1/1. Its function is as follows. Key enzyme in folate metabolism. Catalyzes an essential reaction for de novo glycine and purine synthesis, and for DNA precursor synthesis. The chain is Dihydrofolate reductase (dfr1) from Schizosaccharomyces pombe (strain 972 / ATCC 24843) (Fission yeast).